The chain runs to 343 residues: Ribosomal RNA small subunit methyltransferase C (343 aa).

This sequence belongs to the methyltransferase superfamily. RsmC family. As to quaternary structure, monomer.

The protein localises to the cytoplasm. The enzyme catalyses guanosine(1207) in 16S rRNA + S-adenosyl-L-methionine = N(2)-methylguanosine(1207) in 16S rRNA + S-adenosyl-L-homocysteine + H(+). Functionally, specifically methylates the guanine in position 1207 of 16S rRNA in the 30S particle. This Shigella flexneri serotype 5b (strain 8401) protein is Ribosomal RNA small subunit methyltransferase C.